The primary structure comprises 384 residues: Autophagy-related protein 25 (384 aa).

2 coiled-coil regions span residues 132–236 and 342–379; these read KETA…RRAS and KKNNQTDKDQEIASLRNRLSEMEQNYERVLATMEQWKT. Residues 224 to 247 form a disordered region; the sequence is ESRLSNMNKRRASPRDDAEAEPKR. The segment covering 236–247 has biased composition (basic and acidic residues); it reads SPRDDAEAEPKR.

Belongs to the ADIP family.

It localises to the preautophagosomal structure membrane. In terms of biological role, specifically required for selective degradation of peroxisomes via macropexophagy. This is Autophagy-related protein 25 (ATG25) from Pichia angusta (Yeast).